The sequence spans 144 residues: MRLNTLSPAEGAKHAPKRVGRGIGSGLGKTAGRGHKGQNSRSGGGVRRGFEGGQMPLYRRLPKFGFTSRKAMITAEVRLSELALVEGDVIDLNTLKAANVVGVQIEFAKVMLSGEIARPVTLRGLRVTKGARAAIEAAGGKIEE.

The segment at 1–53 (MRLNTLSPAEGAKHAPKRVGRGIGSGLGKTAGRGHKGQNSRSGGGVRRGFEGG) is disordered. A compositionally biased stretch (gly residues) spans 21-31 (RGIGSGLGKTA).

Belongs to the universal ribosomal protein uL15 family. As to quaternary structure, part of the 50S ribosomal subunit.

Binds to the 23S rRNA. In Serratia proteamaculans (strain 568), this protein is Large ribosomal subunit protein uL15.